A 177-amino-acid chain; its full sequence is Insertion element IS1223 uncharacterized 20.7 kDa protein (177 aa).

Residues 112–131 form a disordered region; sequence KQKGRPRKVPKKSKKTTKKL. Residues 113-128 are compositionally biased toward basic residues; it reads QKGRPRKVPKKSKKTT.

It belongs to the IS150/IS1296 orfA family.

This Lactobacillus johnsonii protein is Insertion element IS1223 uncharacterized 20.7 kDa protein.